A 216-amino-acid chain; its full sequence is Thymidylate kinase (216 aa).

10 to 17 (GVDGSGKT) contributes to the ATP binding site.

The protein belongs to the thymidylate kinase family.

It catalyses the reaction dTMP + ATP = dTDP + ADP. Its function is as follows. Phosphorylation of dTMP to form dTDP in both de novo and salvage pathways of dTTP synthesis. The polypeptide is Thymidylate kinase (Pelotomaculum thermopropionicum (strain DSM 13744 / JCM 10971 / SI)).